The chain runs to 530 residues: Phosphoenolpyruvate carboxykinase (ATP) (530 aa).

Residues Arg58, Tyr195, and Lys201 each coordinate substrate. Residues Lys201, His220, and 236–244 contribute to the ATP site; that span reads GLSGTGKTT. Mn(2+) contacts are provided by Lys201 and His220. Asp257 contributes to the Mn(2+) binding site. ATP is bound by residues Glu285, Arg321, 440 to 441, and Thr446; that span reads RI. Substrate is bound at residue Arg321.

The protein belongs to the phosphoenolpyruvate carboxykinase (ATP) family. Mn(2+) serves as cofactor.

The protein localises to the cytoplasm. The enzyme catalyses oxaloacetate + ATP = phosphoenolpyruvate + ADP + CO2. The protein operates within carbohydrate biosynthesis; gluconeogenesis. Functionally, involved in the gluconeogenesis. Catalyzes the conversion of oxaloacetate (OAA) to phosphoenolpyruvate (PEP) through direct phosphoryl transfer between the nucleoside triphosphate and OAA. The chain is Phosphoenolpyruvate carboxykinase (ATP) from Staphylococcus aureus (strain MSSA476).